The sequence spans 225 residues: Cytochrome c oxidase subunit 2 (225 aa).

Residues 1 to 26 (MMTWSQMSFSDMNSPIMEQMVFFHDH) are Mitochondrial intermembrane-facing. Residues 27–48 (SMMIILMITILTIYMITNIMMN) traverse the membrane as a helical segment. Topologically, residues 49–62 (NLLSRSMMEGQEIE) are mitochondrial matrix. Residues 63–82 (IIWTIIPAITLIFIAIPSLH) traverse the membrane as a helical segment. The Mitochondrial intermembrane portion of the chain corresponds to 83-225 (LLYLTDETFN…KNFINFINSS (143 aa)). Positions 160, 195, 197, 199, 203, and 206 each coordinate Cu cation. E197 serves as a coordination point for Mg(2+).

The protein belongs to the cytochrome c oxidase subunit 2 family. Component of the cytochrome c oxidase (complex IV, CIV), a multisubunit enzyme composed of a catalytic core of 3 subunits and several supernumerary subunits. The complex exists as a monomer or a dimer and forms supercomplexes (SCs) in the inner mitochondrial membrane with ubiquinol-cytochrome c oxidoreductase (cytochrome b-c1 complex, complex III, CIII). Cu cation serves as cofactor.

It is found in the mitochondrion inner membrane. It carries out the reaction 4 Fe(II)-[cytochrome c] + O2 + 8 H(+)(in) = 4 Fe(III)-[cytochrome c] + 2 H2O + 4 H(+)(out). Component of the cytochrome c oxidase, the last enzyme in the mitochondrial electron transport chain which drives oxidative phosphorylation. The respiratory chain contains 3 multisubunit complexes succinate dehydrogenase (complex II, CII), ubiquinol-cytochrome c oxidoreductase (cytochrome b-c1 complex, complex III, CIII) and cytochrome c oxidase (complex IV, CIV), that cooperate to transfer electrons derived from NADH and succinate to molecular oxygen, creating an electrochemical gradient over the inner membrane that drives transmembrane transport and the ATP synthase. Cytochrome c oxidase is the component of the respiratory chain that catalyzes the reduction of oxygen to water. Electrons originating from reduced cytochrome c in the intermembrane space (IMS) are transferred via the dinuclear copper A center (CU(A)) of subunit 2 and heme A of subunit 1 to the active site in subunit 1, a binuclear center (BNC) formed by heme A3 and copper B (CU(B)). The BNC reduces molecular oxygen to 2 water molecules using 4 electrons from cytochrome c in the IMS and 4 protons from the mitochondrial matrix. In Rhipicephalus sanguineus (Brown dog tick), this protein is Cytochrome c oxidase subunit 2 (COII).